The primary structure comprises 69 residues: Conotoxin Eb6.1 (69 aa).

The signal sequence occupies residues 1 to 17; the sequence is VLIIAVLFLTACQLTTA. A propeptide spanning residues 18 to 41 is cleaved from the precursor; the sequence is ETYSRGRQKHRARRSTDKNSKWTR. Cystine bridges form between Cys43–Cys57, Cys50–Cys61, and Cys56–Cys68.

The protein belongs to the conotoxin O1 superfamily. Expressed by the venom duct.

The protein resides in the secreted. This Conus ebraeus (Hebrew cone) protein is Conotoxin Eb6.1 (E1).